A 470-amino-acid polypeptide reads, in one-letter code: Methylenetetrahydrofolate--tRNA-(uracil-5-)-methyltransferase TrmFO (470 aa).

Position 10-15 (10-15) interacts with FAD; sequence GAGLAG.

Belongs to the MnmG family. TrmFO subfamily. The cofactor is FAD.

Its subcellular location is the cytoplasm. It carries out the reaction uridine(54) in tRNA + (6R)-5,10-methylene-5,6,7,8-tetrahydrofolate + NADH + H(+) = 5-methyluridine(54) in tRNA + (6S)-5,6,7,8-tetrahydrofolate + NAD(+). The enzyme catalyses uridine(54) in tRNA + (6R)-5,10-methylene-5,6,7,8-tetrahydrofolate + NADPH + H(+) = 5-methyluridine(54) in tRNA + (6S)-5,6,7,8-tetrahydrofolate + NADP(+). Its function is as follows. Catalyzes the folate-dependent formation of 5-methyl-uridine at position 54 (M-5-U54) in all tRNAs. The protein is Methylenetetrahydrofolate--tRNA-(uracil-5-)-methyltransferase TrmFO of Prochlorococcus marinus subsp. pastoris (strain CCMP1986 / NIES-2087 / MED4).